We begin with the raw amino-acid sequence, 326 residues long: MIKDSSVQVEGQEKVCLDQWVAHYRAYAAKGRSASYIPALGEINVSQLGICIVKPDGTMIKSGDWEIPFTLQSISKVIGFIAACLSRGISYVLERVDVEPTGDAFNSIIRLEIHKPGKPFNPMINAGAITIASLLPGTSVQEKLESLYVLIEKMIEKRPAINEIVFQSEWETAHRNRALAYYLKENGFLESDVEETLEVYLKQCSIEINTEDIALIGLILAHDGYHPIRKEQVLPKEVARLTKALMLTCGMYNASGKFAAFIGLPAKSGVSGGIMTLVPSKSRKDLSFQDGCGIGIYGPAIDEYGNSLPGIMLLEHIAKEWDLSIF.

Ser73, Asn125, Glu169, Asn176, Tyr200, Tyr252, and Val270 together coordinate substrate.

The protein belongs to the glutaminase family. In terms of assembly, homotetramer.

The catalysed reaction is L-glutamine + H2O = L-glutamate + NH4(+). This is Glutaminase 2 from Bacillus cereus (strain ATCC 14579 / DSM 31 / CCUG 7414 / JCM 2152 / NBRC 15305 / NCIMB 9373 / NCTC 2599 / NRRL B-3711).